The chain runs to 553 residues: COP9 signalosome complex subunit 10 (553 aa).

Positions 21–46 (AEMEEDSDEMGVYEEETSQGAEEEVP) are enriched in acidic residues. A disordered region spans residues 21 to 47 (AEMEEDSDEMGVYEEETSQGAEEEVPL). Positions 298-474 (LRTHFSACLQ…DYVYFGDEPR (177 aa)) constitute a PCI domain.

In terms of assembly, component of a COP9 signalosome-like (CSN) complex.

Its subcellular location is the cytoplasm. The protein resides in the nucleus. Functionally, component of the COP9 signalosome (CSN) complex that acts as an regulator of the ubiquitin (Ubl) conjugation pathway by mediating the deneddylation of the cullin subunit of SCF-type E3 ubiquitin-protein ligase complexes. The CSN complex is involved in the regulation of the mating pheromone response. This chain is COP9 signalosome complex subunit 10 (RRI2), found in Eremothecium gossypii (strain ATCC 10895 / CBS 109.51 / FGSC 9923 / NRRL Y-1056) (Yeast).